We begin with the raw amino-acid sequence, 1403 residues long: DNA-directed RNA polymerase subunit beta' (1403 aa).

Zn(2+) contacts are provided by cysteine 70, cysteine 72, cysteine 85, and cysteine 88. Residues aspartate 460, aspartate 462, and aspartate 464 each contribute to the Mg(2+) site. Positions 814, 888, 895, and 898 each coordinate Zn(2+). The tract at residues 1369–1403 is disordered; the sequence is RRKRRMLEQPESLTADTGTSHYGEDEISESGAATA. Residues 1379-1388 are compositionally biased toward polar residues; that stretch reads ESLTADTGTS.

The protein belongs to the RNA polymerase beta' chain family. The RNAP catalytic core consists of 2 alpha, 1 beta, 1 beta' and 1 omega subunit. When a sigma factor is associated with the core the holoenzyme is formed, which can initiate transcription. It depends on Mg(2+) as a cofactor. Zn(2+) serves as cofactor.

The catalysed reaction is RNA(n) + a ribonucleoside 5'-triphosphate = RNA(n+1) + diphosphate. Its function is as follows. DNA-dependent RNA polymerase catalyzes the transcription of DNA into RNA using the four ribonucleoside triphosphates as substrates. This chain is DNA-directed RNA polymerase subunit beta', found in Nitrosococcus oceani (strain ATCC 19707 / BCRC 17464 / JCM 30415 / NCIMB 11848 / C-107).